The following is a 347-amino-acid chain: Dihydroorotase (347 aa).

Zn(2+) contacts are provided by His14 and His16. Substrate contacts are provided by residues 16-18 and Asn42; that span reads HLR. The Zn(2+) site is built by Lys100, His137, and His175. Lys100 is subject to N6-carboxylysine. His137 provides a ligand contact to substrate. Leu220 is a substrate binding site. Zn(2+) is bound at residue Asp248. Residue Asp248 is part of the active site. Substrate-binding residues include His252 and Ala264.

It belongs to the metallo-dependent hydrolases superfamily. DHOase family. Class II DHOase subfamily. Homodimer. It depends on Zn(2+) as a cofactor.

The catalysed reaction is (S)-dihydroorotate + H2O = N-carbamoyl-L-aspartate + H(+). The protein operates within pyrimidine metabolism; UMP biosynthesis via de novo pathway; (S)-dihydroorotate from bicarbonate: step 3/3. Catalyzes the reversible cyclization of carbamoyl aspartate to dihydroorotate. This is Dihydroorotase from Pseudomonas savastanoi pv. phaseolicola (strain 1448A / Race 6) (Pseudomonas syringae pv. phaseolicola (strain 1448A / Race 6)).